A 668-amino-acid polypeptide reads, in one-letter code: Transketolase 1 (668 aa).

Histidine 26 lines the substrate pocket. Thiamine diphosphate is bound by residues histidine 66 and glycine 114–leucine 116. Residue aspartate 155 coordinates Mg(2+). 2 residues coordinate thiamine diphosphate: glycine 156 and asparagine 185. Residues asparagine 185 and isoleucine 187 each coordinate Mg(2+). Histidine 261, arginine 358, and serine 385 together coordinate substrate. Histidine 261 provides a ligand contact to thiamine diphosphate. Residue glutamate 413 is the Proton donor of the active site. A thiamine diphosphate-binding site is contributed by phenylalanine 439. Positions 463, 471, and 522 each coordinate substrate.

This sequence belongs to the transketolase family. Homodimer. Mg(2+) is required as a cofactor. Ca(2+) serves as cofactor. Requires Mn(2+) as cofactor. The cofactor is Co(2+). It depends on thiamine diphosphate as a cofactor.

The catalysed reaction is D-sedoheptulose 7-phosphate + D-glyceraldehyde 3-phosphate = aldehydo-D-ribose 5-phosphate + D-xylulose 5-phosphate. Functionally, catalyzes the transfer of a two-carbon ketol group from a ketose donor to an aldose acceptor, via a covalent intermediate with the cofactor thiamine pyrophosphate. The chain is Transketolase 1 (tktA) from Pasteurella multocida (strain Pm70).